We begin with the raw amino-acid sequence, 198 residues long: Peptidyl-tRNA hydrolase (198 aa).

Tyrosine 15 provides a ligand contact to tRNA. Histidine 20 serves as the catalytic Proton acceptor. Positions 66, 68, and 114 each coordinate tRNA.

The protein belongs to the PTH family. Monomer.

The protein resides in the cytoplasm. The catalysed reaction is an N-acyl-L-alpha-aminoacyl-tRNA + H2O = an N-acyl-L-amino acid + a tRNA + H(+). In terms of biological role, hydrolyzes ribosome-free peptidyl-tRNAs (with 1 or more amino acids incorporated), which drop off the ribosome during protein synthesis, or as a result of ribosome stalling. Its function is as follows. Catalyzes the release of premature peptidyl moieties from peptidyl-tRNA molecules trapped in stalled 50S ribosomal subunits, and thus maintains levels of free tRNAs and 50S ribosomes. The protein is Peptidyl-tRNA hydrolase of Cupriavidus necator (strain ATCC 17699 / DSM 428 / KCTC 22496 / NCIMB 10442 / H16 / Stanier 337) (Ralstonia eutropha).